We begin with the raw amino-acid sequence, 88 residues long: Small ribosomal subunit protein bS20 (88 aa).

The protein belongs to the bacterial ribosomal protein bS20 family.

In terms of biological role, binds directly to 16S ribosomal RNA. This is Small ribosomal subunit protein bS20 from Legionella pneumophila (strain Paris).